The chain runs to 219 residues: Flagellar L-ring protein (219 aa).

The N-terminal stretch at 1–14 (MKRLVLISLVLAAG) is a signal peptide. Residue cysteine 15 is the site of N-palmitoyl cysteine attachment. Cysteine 15 carries S-diacylglycerol cysteine lipidation.

It belongs to the FlgH family. In terms of assembly, the basal body constitutes a major portion of the flagellar organelle and consists of four rings (L,P,S, and M) mounted on a central rod.

It is found in the cell outer membrane. The protein resides in the bacterial flagellum basal body. In terms of biological role, assembles around the rod to form the L-ring and probably protects the motor/basal body from shearing forces during rotation. In Dechloromonas aromatica (strain RCB), this protein is Flagellar L-ring protein.